We begin with the raw amino-acid sequence, 264 residues long: Probable transcriptional regulatory protein PPA1157 (264 aa).

This sequence belongs to the TACO1 family.

The protein localises to the cytoplasm. This is Probable transcriptional regulatory protein PPA1157 from Cutibacterium acnes (strain DSM 16379 / KPA171202) (Propionibacterium acnes).